Consider the following 136-residue polypeptide: Histone H3 (136 aa).

A disordered region spans residues M1–R43. Position 5 is an N6-methylated lysine (K5). Position 10 is an N6-acetyllysine; alternate (K10). Position 10 is an N6-methylated lysine; alternate (K10). S11 bears the Phosphoserine mark. Phosphothreonine is present on T12. An N6-acetyllysine modification is found at K15. K19 and K24 each carry N6-acetyllysine; alternate. 2 positions are modified to N6-methylated lysine; alternate: K19 and K24. An N6-methylated lysine modification is found at K28. S29 is subject to Phosphoserine. The residue at position 37 (K37) is an N6-methylated lysine.

Belongs to the histone H3 family. As to quaternary structure, the nucleosome is a histone octamer containing two molecules each of H2A, H2B, H3 and H4 assembled in one H3-H4 heterotetramer and two H2A-H2B heterodimers. The octamer wraps approximately 147 bp of DNA. In terms of processing, acetylation is generally linked to gene activation. Can be acetylated to form H3K9ac, H3K14ac, H3K18ac and H3K23ac. H3K9ac could compete with H3K9me and prevent gene silencing. H3K9ac is restricted to euchromatin. Post-translationally, methylated to form mainly H3K4me, H3K9me, H3K18me, H3K23me, H3K27me and H3K36me. H3K4me1/2/3, H3K9me3, H3K27me3 and H3K36me1/2/3 are typical marks for euchromatin, whereas heterochromatic chromocenters are enriched in H3K9me1/2 and H3K27me1/2. H2BK143ub1 is probably prerequisite for H3K4me. Can be phosphorylated to form H3S10ph, H3T11ph and H3S28ph.

It localises to the nucleus. Its subcellular location is the chromosome. In terms of biological role, core component of nucleosome. Nucleosomes wrap and compact DNA into chromatin, limiting DNA accessibility to the cellular machineries which require DNA as a template. Histones thereby play a central role in transcription regulation, DNA repair, DNA replication and chromosomal stability. DNA accessibility is regulated via a complex set of post-translational modifications of histones, also called histone code, and nucleosome remodeling. In Griffithsia japonica (Red alga), this protein is Histone H3.